A 446-amino-acid polypeptide reads, in one-letter code: tRNA-2-methylthio-N(6)-dimethylallyladenosine synthase (446 aa).

Positions 2–122 (KKAYVKSYGC…LPDLLRQSRE (121 aa)) constitute an MTTase N-terminal domain. [4Fe-4S] cluster is bound by residues C11, C47, C85, C157, C161, and C164. The Radical SAM core domain occupies 143–375 (RNRGVTGFLT…QDLLDRQRHA (233 aa)). A TRAM domain is found at 378-440 (AASVGTLTEI…SNSLFGETLE (63 aa)).

It belongs to the methylthiotransferase family. MiaB subfamily. Monomer. [4Fe-4S] cluster is required as a cofactor.

It localises to the cytoplasm. It carries out the reaction N(6)-dimethylallyladenosine(37) in tRNA + (sulfur carrier)-SH + AH2 + 2 S-adenosyl-L-methionine = 2-methylsulfanyl-N(6)-dimethylallyladenosine(37) in tRNA + (sulfur carrier)-H + 5'-deoxyadenosine + L-methionine + A + S-adenosyl-L-homocysteine + 2 H(+). In terms of biological role, catalyzes the methylthiolation of N6-(dimethylallyl)adenosine (i(6)A), leading to the formation of 2-methylthio-N6-(dimethylallyl)adenosine (ms(2)i(6)A) at position 37 in tRNAs that read codons beginning with uridine. This Methylorubrum extorquens (strain PA1) (Methylobacterium extorquens) protein is tRNA-2-methylthio-N(6)-dimethylallyladenosine synthase.